We begin with the raw amino-acid sequence, 2365 residues long: Voltage-dependent T-type calcium channel subunit alpha-1H (2365 aa).

Residues 1 to 63 (MTEGTLAADE…PGTECGADLG (63 aa)) form a disordered region. Over 1–100 (MTEGTLAADE…SWCLRLVSRR (100 aa)) the chain is Cytoplasmic. Over residues 16–36 (GASPSAPAAPVRASPASPGVP) the composition is skewed to low complexity. An I repeat occupies 87 to 422 (TRPRSWCLRL…LCLVVIATQF (336 aa)). Residues 101–119 (WFEHISMLVIMLNCVTLGM) form a helical membrane-spanning segment. Over 120–141 (FRPCEDVECRSERCSILEAFDD) the chain is Extracellular. Position 140 (aspartate 140) interacts with Zn(2+). A helical membrane pass occupies residues 142-160 (FIFAFFAVEMVIKMVALGL). The Cytoplasmic segment spans residues 161 to 169 (FGQKCYLGD). Residues 170–184 (TWNRLDFFIVMAGMM) traverse the membrane as a helical segment. The Extracellular portion of the chain corresponds to 185-193 (EYSLDGHNV). Residues aspartate 189 and histidine 191 each contribute to the Zn(2+) site. Asparagine 192 is a glycosylation site (N-linked (GlcNAc...) asparagine). A helical membrane pass occupies residues 194-212 (SLSAIRTVRVLRPLRAINR). The Cytoplasmic segment spans residues 213-232 (VPSMRILVTLLLDTLPMLGN). A helical transmembrane segment spans residues 233 to 253 (VLLLCFFVFFIFGIVGVQLWA). The Extracellular segment spans residues 254–394 (GLLRNRCFLD…YYVMDAHSFY (141 aa)). A glycan (N-linked (GlcNAc...) asparagine) is linked at asparagine 271. A helical membrane pass occupies residues 395–419 (NFIYFILLIIVGSFFMINLCLVVIA). The Cytoplasmic portion of the chain corresponds to 420-790 (TQFSETKQRE…SKLRRIVDSK (371 aa)). Disordered regions lie at residues 490–573 (VDPS…SESV), 618–656 (PSGA…SPSP), and 737–761 (GDCR…RWRP). Residues 500 to 532 (GPRRRPRRAGRRTASVHHLVYHHHHHHHHHYHF) show a composition bias toward basic residues. The segment covering 557-566 (PPSPPSPGHG) has biased composition (pro residues). Residues 621-631 (AVNSKGSTSSR) show a composition bias toward polar residues. The stretch at 776 to 1015 (WASFSSKLRR…LLVAILVEGF (240 aa)) is one II repeat. Residues 791–811 (YFNRGIMAAILVNTLSMGVEY) form a helical membrane-spanning segment. Residues 812–824 (HEQPDELTNALEI) lie on the Extracellular side of the membrane. The helical transmembrane segment at 825–846 (SNIVFTSMFALEMLLKLLACGP) threads the bilayer. Residues 847–852 (LGYIRN) lie on the Cytoplasmic side of the membrane. The helical transmembrane segment at 853–871 (PYNIFDGIVVIISVWEIVG) threads the bilayer. Residues 872–879 (QADGGLSV) lie on the Extracellular side of the membrane. The chain crosses the membrane as a helical span at residues 880-903 (LRTFRLLRVLKLVRFLPALRRQLV). The Cytoplasmic portion of the chain corresponds to 904-914 (VLMRTMDNVAT). Residues 915–935 (FCMLLMLFIFIFSILGMHLFG) traverse the membrane as a helical segment. The Extracellular segment spans residues 936 to 987 (CKFSLKTDSGDTVPDRKNFDSLLWAIVTVFQILTQEDWNVVLYNGMASTSSW). A helical transmembrane segment spans residues 988-1012 (AALYFVALMTFGNYVLFNLLVAILV). Residues 1013-1301 (EGFQAEGDAT…NRLRVSCQKV (289 aa)) are Cytoplasmic-facing. The tract at residues 1059-1215 (PNGHLEGRGS…HRSTMDLCPP (157 aa)) is disordered. The span at 1130–1147 (GPNSAGSSRRSSWNSLGR) shows a compositional bias: low complexity. Residues 1199-1209 (RRAESLGHRST) show a composition bias toward basic and acidic residues. An III repeat occupies 1292–1569 (NRLRVSCQKV…MFVGVVVENF (278 aa)). A helical transmembrane segment spans residues 1302–1324 (IAHKMFDHVVLVFIFLNCITIAL). The Extracellular portion of the chain corresponds to 1325–1342 (ERPDIDPGSTERAFLSVS). Residues 1343 to 1363 (NYIFTAIFVVEMMVKVVALGL) traverse the membrane as a helical segment. Topologically, residues 1364-1373 (LWGEHAYLQS) are cytoplasmic. The chain crosses the membrane as a helical span at residues 1374-1393 (SWNVLDGLLVLVSLVDIIVA). The Extracellular segment spans residues 1394–1407 (VASAGGAKILGVLR). A helical transmembrane segment spans residues 1408 to 1429 (VLRLLRTLRPLRVISRAPGLKL). The Cytoplasmic segment spans residues 1430–1439 (VVETLISSLR). Residues 1440–1463 (PIGNIVLICCAFFIIFGILGVQLF) traverse the membrane as a helical segment. Residues 1464-1540 (KGKFYYCEGT…DQQPVQNHNP (77 aa)) lie on the Extracellular side of the membrane. An N-linked (GlcNAc...) asparagine glycan is attached at asparagine 1477. The helical transmembrane segment at 1541–1566 (WMLLYFISFLLIVSFFVLNMFVGVVV) threads the bilayer. At 1567-1627 (ENFHKCRQHQ…RRSIHSLCTS (61 aa)) the chain is on the cytoplasmic side. The stretch at 1613–1874 (DYSHTRRSIH…VVVAVLMKHL (262 aa)) is one IV repeat. Residues 1628 to 1648 (HYLDLFITFIICLNVITMSME) form a helical membrane-spanning segment. The Extracellular segment spans residues 1649–1662 (HYNQPKSLDEALKY). Residues 1663 to 1684 (CNYVFTIVFVFEAALKLVAFGF) form a helical membrane-spanning segment. The Cytoplasmic segment spans residues 1685 to 1691 (RRFFKDR). The chain crosses the membrane as a helical span at residues 1692–1710 (WNQLDLAIVLLSIMGIALE). Topologically, residues 1711 to 1724 (EIEMNAALPINPTI) are extracellular. Residues 1725-1748 (IRIMRVLRIARVLKLLKMATGMRA) form a helical membrane-spanning segment. Residues 1749–1762 (LLDTVVQALPQVGN) are Cytoplasmic-facing. The chain crosses the membrane as a helical span at residues 1763 to 1783 (LGLLFMLLFFIYAALGVELFG). The Extracellular segment spans residues 1784-1846 (RLECSEDNPC…KHCLSYLPAL (63 aa)). A helical transmembrane segment spans residues 1847–1874 (SPVYFVTFVLVAQFVLVNVVVAVLMKHL). At 1875-2365 (EESNKEARED…APDDSGDEPV (491 aa)) the chain is on the cytoplasmic side. Polar residues-rich tracts occupy residues 1897 to 1916 (QGST…TEPD) and 1967 to 1983 (VTSA…SFQV). Disordered regions lie at residues 1897 to 1920 (QGST…TPNL), 1967 to 1999 (VTSA…PLCA), 2053 to 2264 (APLG…GERW), and 2321 to 2365 (ELSM…DEPV). The span at 2092-2102 (DDAEAADPADE) shows a compositional bias: acidic residues. The segment covering 2172–2187 (GDGHLESGEVRARASE) has biased composition (basic and acidic residues).

The protein belongs to the calcium channel alpha-1 subunit (TC 1.A.1.11) family. CACNA1H subfamily. In terms of assembly, interacts (via N-terminal cytoplasmic domain) with STAC. In response to raising of intracellular calcium, the T-type channels are activated by CaM-kinase II. In terms of tissue distribution, is highly expressed in lumbosacral and thoracolumbar dorsal root ganglion neurons.

The protein localises to the cell membrane. It catalyses the reaction Ca(2+)(in) = Ca(2+)(out). Functionally, voltage-sensitive calcium channel that gives rise to T-type calcium currents. T-type calcium channels belong to the 'low-voltage activated (LVA)' group. A particularity of this type of channel is an opening at quite negative potentials, and a voltage-dependent inactivation. T-type channels serve pacemaking functions in both central neurons and cardiac nodal cells and support calcium signaling in secretory cells and vascular smooth muscle. They may also be involved in the modulation of firing patterns of neurons. In the adrenal zona glomerulosa, participates in the signaling pathway leading to aldosterone production in response to either AGT/angiotensin II, or hyperkalemia. The polypeptide is Voltage-dependent T-type calcium channel subunit alpha-1H (Cacna1h) (Mus musculus (Mouse)).